A 207-amino-acid polypeptide reads, in one-letter code: ANERPPGSCSSSGCRRCCRPGPYHSHLAVLKAEQAAVFKFPLAPLGCSGLGSALLAAGPGMPGPAGASHLPLELQLRGKLEAAGSGEPGSKAKKGRRSRTVFTELQLMGLEKRFEKQKYLSTPDRIDLAESLGLSQLQVKTWYQNRRMKWKKIVLQGGGLESPTKPKGRPKKNSIPSSEQLSEQERAKETEKPPESPGEPSERQQEE.

Positions 95 to 154 (GRRSRTVFTELQLMGLEKRFEKQKYLSTPDRIDLAESLGLSQLQVKTWYQNRRMKWKKIV) form a DNA-binding region, homeobox. A disordered region spans residues 157 to 207 (GGGLESPTKPKGRPKKNSIPSSEQLSEQERAKETEKPPESPGEPSERQQEE). The span at 183-207 (EQERAKETEKPPESPGEPSERQQEE) shows a compositional bias: basic and acidic residues.

Belongs to the BAR homeobox family. Expressed predominantly in the facial primordia, developing stomach, and proximal limbs.

The protein localises to the nucleus. In terms of biological role, transcription factor, which is involved in craniofacial development, in odontogenic region definition, and in stomach organogenesis. Binds to a regulatory module of the NCAM promoter. This chain is Homeobox protein BarH-like 1 (BARX1), found in Gallus gallus (Chicken).